Reading from the N-terminus, the 619-residue chain is Vitamin B12 transporter BtuB (619 aa).

The signal sequence occupies residues 1-25; the sequence is MINKKRLLLSTVSIMVISGWNQASA. A TonB box motif is present at residues 31–38; that stretch reads DSLVVTAS. The TBDR plug domain occupies 43–157; it reads PISSILAPYT…IGGVINIITT (115 aa). Residues Leu-88, Ser-90, and 115 to 116 contribute to the cyanocob(III)alamin site; that span reads IS. Positions 160 to 619 constitute a TBDR beta-barrel domain; it reads KLGTSLNVGI…EYYLTGSYNF (460 aa). 3 beta stranded membrane-spanning segments follow: residues 163–170, 174–183, and 189–200; these read TSLNVGIG, YQTYDGATQQ, and TVLTAAANYTYT. Ca(2+)-binding residues include Asp-204, Gln-216, Asp-218, and Asp-220. A run of 2 beta stranded transmembrane segments spans residues 222 to 232 and 237 to 253; these read FMSKMLWLGVD and EQVS…NRTS. Ca(2+) contacts are provided by Tyr-254 and Asp-255. Residue Ala-256 coordinates cyanocob(III)alamin. Asp-268 is a Ca(2+) binding site. The next 17 membrane-spanning stretches (beta stranded) occupy residues 270-284, 286-303, 316-332, 335-344, 360-376, 378-388, 392-407, 410-424, 441-450, 456-465, 478-495, 499-514, 522-534, 540-556, 563-577, 590-601, and 607-619; these read RELY…VRFN, GIYS…KDYN, SLND…NTFQ, QGIVSTGVDF, KTVR…QQLK, FILEGAIRSDK, AGWN…WEFI, YRLI…KAPT, ESKQWEGGIE, LTWRMTVYRN, YYNI…TGLI, MFQH…PRNS, RRAK…QLDW, DWGL…DKDF, RVKL…LTVS, IANLLDKDYETV, and PGRE…SYNF. Ser-316 is a binding site for cyanocob(III)alamin. Arg-522 provides a ligand contact to cyanocob(III)alamin. The TonB C-terminal box signature appears at 602-619; it reads YGYRIPGREYYLTGSYNF.

It belongs to the TonB-dependent receptor family. BtuB (TC 1.B.14.3.1) subfamily.

It localises to the cell outer membrane. Its function is as follows. Involved in the active translocation of vitamin B12 (cyanocobalamin) across the outer membrane to the periplasmic space. It derives its energy for transport by interacting with the trans-periplasmic membrane protein TonB. The chain is Vitamin B12 transporter BtuB from Photorhabdus laumondii subsp. laumondii (strain DSM 15139 / CIP 105565 / TT01) (Photorhabdus luminescens subsp. laumondii).